The following is an 85-amino-acid chain: METVVAFTAIAVSIMIGLAALGTALGFGILGGKFLEAAARQPELAPQLQVKMFIVAGLIDAIAMIGVAVALLFTFANPFLTQVAG.

Helical transmembrane passes span 10–30 and 53–73; these read IAVS…FGIL and FIVA…ALLF.

It belongs to the ATPase C chain family. As to quaternary structure, F-type ATPases have 2 components, F(1) - the catalytic core - and F(0) - the membrane proton channel. F(1) has five subunits: alpha(3), beta(3), gamma(1), delta(1), epsilon(1). F(0) has three main subunits: a(1), b(2) and c(10-14). The alpha and beta chains form an alternating ring which encloses part of the gamma chain. F(1) is attached to F(0) by a central stalk formed by the gamma and epsilon chains, while a peripheral stalk is formed by the delta and b chains.

The protein localises to the cell inner membrane. Its function is as follows. F(1)F(0) ATP synthase produces ATP from ADP in the presence of a proton or sodium gradient. F-type ATPases consist of two structural domains, F(1) containing the extramembraneous catalytic core and F(0) containing the membrane proton channel, linked together by a central stalk and a peripheral stalk. During catalysis, ATP synthesis in the catalytic domain of F(1) is coupled via a rotary mechanism of the central stalk subunits to proton translocation. Key component of the F(0) channel; it plays a direct role in translocation across the membrane. A homomeric c-ring of between 10-14 subunits forms the central stalk rotor element with the F(1) delta and epsilon subunits. In Idiomarina loihiensis (strain ATCC BAA-735 / DSM 15497 / L2-TR), this protein is ATP synthase subunit c.